Reading from the N-terminus, the 232-residue chain is Cytidylate kinase (232 aa).

19–27 provides a ligand contact to ATP; that stretch reads GPAGVGKTT.

This sequence belongs to the cytidylate kinase family. Type 1 subfamily.

It is found in the cytoplasm. It catalyses the reaction CMP + ATP = CDP + ADP. The enzyme catalyses dCMP + ATP = dCDP + ADP. This is Cytidylate kinase from Nitratidesulfovibrio vulgaris (strain DP4) (Desulfovibrio vulgaris).